Reading from the N-terminus, the 171-residue chain is uncharacterized protein (171 aa).

Required for production of the bacteriocin SkfA. This is an uncharacterized protein from Bacillus subtilis (strain 168).